Consider the following 424-residue polypeptide: Serine/threonine-protein kinase H1 (424 aa).

Residue glycine 2 is the site of N-myristoyl glycine attachment. Cysteine 3 carries S-palmitoyl cysteine lipidation. Positions 56–80 are disordered; sequence SQYAHPCPGPPTAGHTEPPSEPPRR. The Protein kinase domain occupies 98–355; that stretch reads YDIKALIGRG…ALQALRHPWV (258 aa). Residues 104 to 112 and lysine 127 each bind ATP; that span reads IGRGSFSRV. Aspartate 218 acts as the Proton acceptor in catalysis. The interval 378 to 407 is disordered; that stretch reads RASSRCQSTKSAQSTRSSRSTRSNKSRRVR. 2 positions are modified to phosphoserine; by autocatalysis: serine 380 and serine 381. A compositionally biased stretch (low complexity) spans 385-398; sequence STKSAQSTRSSRST.

This sequence belongs to the protein kinase superfamily. CAMK Ser/Thr protein kinase family. Homodimer. Post-translationally, autophosphorylated on serine residues. In terms of processing, myristoylated. Required for membrane association. Prerequisite for palmitoylation to occur. Palmitoylated. In terms of tissue distribution, expressed in all tissues and cell lines tested with the highest level of abundance in testis.

The protein resides in the golgi apparatus. It is found in the cytoplasm. It localises to the cytoskeleton. Its subcellular location is the microtubule organizing center. The protein localises to the centrosome. The protein resides in the nucleus speckle. It is found in the endoplasmic reticulum membrane. It localises to the cell membrane. The enzyme catalyses L-seryl-[protein] + ATP = O-phospho-L-seryl-[protein] + ADP + H(+). The catalysed reaction is L-threonyl-[protein] + ATP = O-phospho-L-threonyl-[protein] + ADP + H(+). Activity depends on Ca(2+) concentration. Serine/threonine protein kinase that may be involved in the regulation of pre-mRNA processing. It may phosphorylate components of nuclear splice factor compartments (SFC), such as non-snRNP splicing factors containing a serine/arginine-rich domain (SR proteins). Reversible phosphorylation of SR proteins may cause their release into the nucleoplasm and change their local concentration, thereby influencing alternative splicing. The sequence is that of Serine/threonine-protein kinase H1 (PSKH1) from Homo sapiens (Human).